Reading from the N-terminus, the 315-residue chain is Ectopic P granules protein 4 (315 aa).

The next 6 helical transmembrane spans lie at 84–104 (IGFLVLWQVCILILGLFFSFF), 113–133 (IGYILIIPIFFASRIIQALWF), 146–166 (LPPPPVVPFSSMLAGTLISAL), 190–210 (IVYLHMALLNSMYCFDYFFDG), 221–241 (IFESHWPYFLGFGTPLALACS), and 242–262 (ISSNMFVNSVIFALLFPFFII).

The protein belongs to the EI24 family. As to expression, expressed in pharyngeal and body wall muscles and intestine cells.

It is found in the cytoplasm. It localises to the membrane. In terms of biological role, involved in autophagy. Thought to act in autophagasome and omegasome formation. The protein is Ectopic P granules protein 4 of Caenorhabditis elegans.